The sequence spans 166 residues: HTH-type transcriptional regulator PrsX (166 aa).

Residues 25-159 enclose the HTH marR-type domain; it reads EHLLMQLCIR…FEVINKKLLA (135 aa).

The protein localises to the cytoplasm. The sequence is that of HTH-type transcriptional regulator PrsX (prsX) from Escherichia coli O6:H1 (strain CFT073 / ATCC 700928 / UPEC).